The chain runs to 257 residues: Pyridoxine 5'-phosphate synthase (257 aa).

Asparagine 12 lines the 3-amino-2-oxopropyl phosphate pocket. 14 to 15 (DH) lines the 1-deoxy-D-xylulose 5-phosphate pocket. Residue arginine 23 participates in 3-amino-2-oxopropyl phosphate binding. The Proton acceptor role is filled by histidine 48. Residues arginine 50 and histidine 55 each contribute to the 1-deoxy-D-xylulose 5-phosphate site. Glutamate 75 (proton acceptor) is an active-site residue. Residue threonine 105 participates in 1-deoxy-D-xylulose 5-phosphate binding. Histidine 199 functions as the Proton donor in the catalytic mechanism. 3-amino-2-oxopropyl phosphate is bound by residues glycine 200 and 221–222 (GH).

This sequence belongs to the PNP synthase family. In terms of assembly, homooctamer; tetramer of dimers.

Its subcellular location is the cytoplasm. It carries out the reaction 3-amino-2-oxopropyl phosphate + 1-deoxy-D-xylulose 5-phosphate = pyridoxine 5'-phosphate + phosphate + 2 H2O + H(+). It functions in the pathway cofactor biosynthesis; pyridoxine 5'-phosphate biosynthesis; pyridoxine 5'-phosphate from D-erythrose 4-phosphate: step 5/5. Functionally, catalyzes the complicated ring closure reaction between the two acyclic compounds 1-deoxy-D-xylulose-5-phosphate (DXP) and 3-amino-2-oxopropyl phosphate (1-amino-acetone-3-phosphate or AAP) to form pyridoxine 5'-phosphate (PNP) and inorganic phosphate. This chain is Pyridoxine 5'-phosphate synthase, found in Xanthobacter autotrophicus (strain ATCC BAA-1158 / Py2).